Here is a 423-residue protein sequence, read N- to C-terminus: Lipoamide acyltransferase component of branched-chain alpha-keto acid dehydrogenase complex (423 aa).

The 76-residue stretch at 3-78 (THVIKMPDIG…AVGSELIRIE (76 aa)) folds into the Lipoyl-binding domain. The residue at position 44 (K44) is an N6-lipoyllysine. The Peripheral subunit-binding (PSBD) domain occupies 137-174 (LASPAVRKRALDAGIELRYVHGSGPAGRILHEDLDAFM). Active-site residues include H395 and D399.

This sequence belongs to the 2-oxoacid dehydrogenase family. In terms of assembly, forms a 24-polypeptide structural core with octahedral symmetry. It depends on (R)-lipoate as a cofactor.

The enzyme catalyses N(6)-[(R)-dihydrolipoyl]-L-lysyl-[protein] + 2-methylpropanoyl-CoA = N(6)-[(R)-S(8)-2-methylpropanoyldihydrolipoyl]-L-lysyl-[protein] + CoA. Functionally, the branched-chain alpha-keto dehydrogenase complex catalyzes the overall conversion of alpha-keto acids to acyl-CoA and CO(2). It contains multiple copies of three enzymatic components: branched-chain alpha-keto acid decarboxylase (E1), lipoamide acyltransferase (E2) and lipoamide dehydrogenase (E3). This Pseudomonas putida (Arthrobacter siderocapsulatus) protein is Lipoamide acyltransferase component of branched-chain alpha-keto acid dehydrogenase complex (bkdB).